The following is a 103-amino-acid chain: Pyrimidine/purine nucleoside phosphorylase (103 aa).

It belongs to the nucleoside phosphorylase PpnP family.

The catalysed reaction is a purine D-ribonucleoside + phosphate = a purine nucleobase + alpha-D-ribose 1-phosphate. It catalyses the reaction adenosine + phosphate = alpha-D-ribose 1-phosphate + adenine. It carries out the reaction cytidine + phosphate = cytosine + alpha-D-ribose 1-phosphate. The enzyme catalyses guanosine + phosphate = alpha-D-ribose 1-phosphate + guanine. The catalysed reaction is inosine + phosphate = alpha-D-ribose 1-phosphate + hypoxanthine. It catalyses the reaction thymidine + phosphate = 2-deoxy-alpha-D-ribose 1-phosphate + thymine. It carries out the reaction uridine + phosphate = alpha-D-ribose 1-phosphate + uracil. The enzyme catalyses xanthosine + phosphate = alpha-D-ribose 1-phosphate + xanthine. Catalyzes the phosphorolysis of diverse nucleosides, yielding D-ribose 1-phosphate and the respective free bases. Can use uridine, adenosine, guanosine, cytidine, thymidine, inosine and xanthosine as substrates. Also catalyzes the reverse reactions. This chain is Pyrimidine/purine nucleoside phosphorylase, found in Shewanella frigidimarina (strain NCIMB 400).